Consider the following 865-residue polypeptide: Leucine--tRNA ligase (865 aa).

Residues 58–68 (PYPSGNLHMGH) carry the 'HIGH' region motif. A 'KMSKS' region motif is present at residues 629–633 (KMSKS). Lysine 632 is an ATP binding site.

This sequence belongs to the class-I aminoacyl-tRNA synthetase family.

It is found in the cytoplasm. It carries out the reaction tRNA(Leu) + L-leucine + ATP = L-leucyl-tRNA(Leu) + AMP + diphosphate. The chain is Leucine--tRNA ligase from Synechococcus elongatus (strain ATCC 33912 / PCC 7942 / FACHB-805) (Anacystis nidulans R2).